Reading from the N-terminus, the 302-residue chain is Elongation factor Ts (302 aa).

The interval T80–V83 is involved in Mg(2+) ion dislocation from EF-Tu.

The protein belongs to the EF-Ts family.

It localises to the cytoplasm. Associates with the EF-Tu.GDP complex and induces the exchange of GDP to GTP. It remains bound to the aminoacyl-tRNA.EF-Tu.GTP complex up to the GTP hydrolysis stage on the ribosome. The protein is Elongation factor Ts of Gluconobacter oxydans (strain 621H) (Gluconobacter suboxydans).